Reading from the N-terminus, the 511-residue chain is Bifunctional purine biosynthesis protein PurH (511 aa).

In terms of domain architecture, MGS-like spans 1–147 (MIQIKRALIS…KNYKHTLVLT (147 aa)).

This sequence belongs to the PurH family.

It carries out the reaction (6R)-10-formyltetrahydrofolate + 5-amino-1-(5-phospho-beta-D-ribosyl)imidazole-4-carboxamide = 5-formamido-1-(5-phospho-D-ribosyl)imidazole-4-carboxamide + (6S)-5,6,7,8-tetrahydrofolate. The enzyme catalyses IMP + H2O = 5-formamido-1-(5-phospho-D-ribosyl)imidazole-4-carboxamide. The protein operates within purine metabolism; IMP biosynthesis via de novo pathway; 5-formamido-1-(5-phospho-D-ribosyl)imidazole-4-carboxamide from 5-amino-1-(5-phospho-D-ribosyl)imidazole-4-carboxamide (10-formyl THF route): step 1/1. Its pathway is purine metabolism; IMP biosynthesis via de novo pathway; IMP from 5-formamido-1-(5-phospho-D-ribosyl)imidazole-4-carboxamide: step 1/1. The protein is Bifunctional purine biosynthesis protein PurH of Leptospira interrogans serogroup Icterohaemorrhagiae serovar Lai (strain 56601).